Consider the following 301-residue polypeptide: Inosose dehydratase (301 aa).

This sequence belongs to the IolE/MocC family. Glutathione serves as cofactor. Co(2+) is required as a cofactor. The cofactor is Mn(2+).

It carries out the reaction scyllo-inosose = 3D-3,5/4-trihydroxycyclohexane-1,2-dione + H2O. Its pathway is polyol metabolism; myo-inositol degradation into acetyl-CoA; acetyl-CoA from myo-inositol: step 2/7. In terms of biological role, catalyzes the dehydration of inosose (2-keto-myo-inositol, 2KMI or 2,4,6/3,5-pentahydroxycyclohexanone) to 3D-(3,5/4)-trihydroxycyclohexane-1,2-dione (D-2,3-diketo-4-deoxy-epi-inositol). The chain is Inosose dehydratase from Lacticaseibacillus casei (strain BL23) (Lactobacillus casei).